A 428-amino-acid polypeptide reads, in one-letter code: Involucrin (428 aa).

Disordered regions lie at residues 1-128 (MSQQ…EEKK) and 140-398 (KRDD…GQAQ). Positions 56 to 76 (PSKHEEKHVTIVKGVPEHECE) are enriched in basic and acidic residues. The span at 77–92 (QQQQAQGQERQQQHWG) shows a compositional bias: low complexity. Basic and acidic residues-rich tracts occupy residues 107 to 117 (LKQEEAQREKQ), 162 to 174 (QLKHLEQQEKPLE), and 192 to 208 (QLKHLEEQKGQLKHLEQ). Positions 209 to 218 (QEGQLELPEQ) are enriched in low complexity. Positions 220–297 (DQPKHLEQLE…CEGQLEHLEQ (78 aa)) are enriched in basic and acidic residues. A compositionally biased stretch (low complexity) spans 298–311 (QEGQLELPEQQVGQ). Basic and acidic residues-rich tracts occupy residues 313–327 (KHLEQEEKQLEHPEQ), 352–366 (KHLEQQEKQLEHPEQ), and 374–385 (QLKDLEQQERQL).

It belongs to the involucrin family. As to quaternary structure, directly or indirectly cross-linked to cornifelin (CNFN). Post-translationally, substrate of transglutaminase. Specific glutamines or lysines are cross-linked to keratins, desmoplakin and to inter involucrin molecules. As to expression, keratinocytes of epidermis and other stratified squamous epithelia.

It localises to the cytoplasm. In terms of biological role, part of the insoluble cornified cell envelope (CE) of stratified squamous epithelia. The chain is Involucrin (IVL) from Cebus albifrons (White-fronted capuchin).